Here is a 239-residue protein sequence, read N- to C-terminus: 1-(5-phosphoribosyl)-5-[(5-phosphoribosylamino)methylideneamino] imidazole-4-carboxamide isomerase (239 aa).

Catalysis depends on Asp-8, which acts as the Proton acceptor. Asp-129 (proton donor) is an active-site residue.

The protein belongs to the HisA/HisF family.

It localises to the cytoplasm. It carries out the reaction 1-(5-phospho-beta-D-ribosyl)-5-[(5-phospho-beta-D-ribosylamino)methylideneamino]imidazole-4-carboxamide = 5-[(5-phospho-1-deoxy-D-ribulos-1-ylimino)methylamino]-1-(5-phospho-beta-D-ribosyl)imidazole-4-carboxamide. It functions in the pathway amino-acid biosynthesis; L-histidine biosynthesis; L-histidine from 5-phospho-alpha-D-ribose 1-diphosphate: step 4/9. In Bacillus cereus (strain ZK / E33L), this protein is 1-(5-phosphoribosyl)-5-[(5-phosphoribosylamino)methylideneamino] imidazole-4-carboxamide isomerase.